The primary structure comprises 237 residues: Uracil-DNA glycosylase (237 aa).

Asp77 functions as the Proton acceptor in the catalytic mechanism.

Belongs to the uracil-DNA glycosylase (UDG) superfamily. UNG family.

It localises to the cytoplasm. It carries out the reaction Hydrolyzes single-stranded DNA or mismatched double-stranded DNA and polynucleotides, releasing free uracil.. Functionally, excises uracil residues from the DNA which can arise as a result of misincorporation of dUMP residues by DNA polymerase or due to deamination of cytosine. This is Uracil-DNA glycosylase from Acinetobacter baylyi (strain ATCC 33305 / BD413 / ADP1).